Here is a 491-residue protein sequence, read N- to C-terminus: Glutamate--tRNA ligase (491 aa).

The 'HIGH' region motif lies at 9-19 (PSPTGTPHVGL). The short motif at 253 to 257 (KLSKR) is the 'KMSKS' region element. Lys256 contributes to the ATP binding site.

This sequence belongs to the class-I aminoacyl-tRNA synthetase family. Glutamate--tRNA ligase type 1 subfamily. In terms of assembly, monomer.

The protein localises to the cytoplasm. It carries out the reaction tRNA(Glu) + L-glutamate + ATP = L-glutamyl-tRNA(Glu) + AMP + diphosphate. Functionally, catalyzes the attachment of glutamate to tRNA(Glu) in a two-step reaction: glutamate is first activated by ATP to form Glu-AMP and then transferred to the acceptor end of tRNA(Glu). The sequence is that of Glutamate--tRNA ligase from Mycolicibacterium gilvum (strain PYR-GCK) (Mycobacterium gilvum (strain PYR-GCK)).